A 336-amino-acid chain; its full sequence is Acyl-CoA-binding domain-containing protein 4 (336 aa).

The chain crosses the membrane as a helical; Signal-anchor span at residues 12–32; the sequence is AVIGLLFAFLVAKLISTVIAF. Residues 40-88 form a disordered region; sequence TRSTPTSPSAADTPAAPAPPPASLDGGHGDTSDGSGSDSDSDWEGVEST. The segment covering 42 to 54 has biased composition (low complexity); sequence STPTSPSAADTPA. Over residues 78 to 88 the composition is skewed to acidic residues; sequence SDSDWEGVEST. The 89-residue stretch at 90 to 178 folds into the ACB domain; sequence LDEEFSAASA…VDELFPNWSM (89 aa). An acyl-CoA is bound by residues 120–124, lysine 142, lysine 146, and tyrosine 165; that span reads YGLYK. Residue asparagine 175 is glycosylated (N-linked (GlcNAc...) asparagine). The interval 179–202 is disordered; sequence GSSTKRKDEDTTVSASSSKGPMGP. Asparagine 216 carries N-linked (GlcNAc...) asparagine glycosylation. ANK repeat units follow at residues 251–280 and 284–313; these read EGRT…DVNA and EGQT…DVQI.

The protein belongs to the ACBP family. Highly expressed in leaves. Expressed at low levels in roots and seeds.

It localises to the endoplasmic reticulum membrane. Functionally, binds medium- and long-chain acyl-CoA esters with high affinity. Can interact in vitro with palmitoyl-CoA, linoleoyl-CoA and linolenoyl-CoA. Binds phosphatidic acid (PA) and phosphatidylcholine (PC) in vitro. May play a role in the biosynthesis of phospholipids. This chain is Acyl-CoA-binding domain-containing protein 4, found in Oryza sativa subsp. japonica (Rice).